Reading from the N-terminus, the 382-residue chain is Queuine tRNA-ribosyltransferase (382 aa).

D96 acts as the Proton acceptor in catalysis. Substrate contacts are provided by residues 96-100 (DSGGF), D151, Q194, and G221. The interval 252 to 258 (GVGAPDS) is RNA binding. The active-site Nucleophile is D271. The RNA binding; important for wobble base 34 recognition stretch occupies residues 276 to 280 (TRIAR). Residues C309, C311, C314, and H340 each coordinate Zn(2+).

Belongs to the queuine tRNA-ribosyltransferase family. As to quaternary structure, homodimer. Within each dimer, one monomer is responsible for RNA recognition and catalysis, while the other monomer binds to the replacement base PreQ1. Zn(2+) is required as a cofactor.

It catalyses the reaction 7-aminomethyl-7-carbaguanine + guanosine(34) in tRNA = 7-aminomethyl-7-carbaguanosine(34) in tRNA + guanine. The protein operates within tRNA modification; tRNA-queuosine biosynthesis. Functionally, catalyzes the base-exchange of a guanine (G) residue with the queuine precursor 7-aminomethyl-7-deazaguanine (PreQ1) at position 34 (anticodon wobble position) in tRNAs with GU(N) anticodons (tRNA-Asp, -Asn, -His and -Tyr). Catalysis occurs through a double-displacement mechanism. The nucleophile active site attacks the C1' of nucleotide 34 to detach the guanine base from the RNA, forming a covalent enzyme-RNA intermediate. The proton acceptor active site deprotonates the incoming PreQ1, allowing a nucleophilic attack on the C1' of the ribose to form the product. After dissociation, two additional enzymatic reactions on the tRNA convert PreQ1 to queuine (Q), resulting in the hypermodified nucleoside queuosine (7-(((4,5-cis-dihydroxy-2-cyclopenten-1-yl)amino)methyl)-7-deazaguanosine). This chain is Queuine tRNA-ribosyltransferase, found in Lactococcus lactis subsp. cremoris (strain MG1363).